The following is a 100-amino-acid chain: UPF0213 protein YhbQ (100 aa).

The region spanning 2–77 (TPWFLYLIRT…KQLTKRQKER (76 aa)) is the GIY-YIG domain.

Belongs to the UPF0213 family.

The sequence is that of UPF0213 protein YhbQ from Escherichia coli O1:K1 / APEC.